A 545-amino-acid polypeptide reads, in one-letter code: Beta-sesquiphellandrene synthase (545 aa).

The Mg(2+) site is built by Asp-299, Asp-303, Asn-443, Ser-447, and Glu-451. The DDXXD motif signature appears at 299–303 (DDIMD).

Belongs to the terpene synthase family. Mg(2+) serves as cofactor. Requires Mn(2+) as cofactor.

It localises to the cytoplasm. It catalyses the reaction (2E,6E)-farnesyl diphosphate = beta-sesquiphellandrene + diphosphate. It functions in the pathway secondary metabolite biosynthesis; terpenoid biosynthesis. Its function is as follows. Sesquiterpene synthase converting farnesyl diphosphate into beta-sesquiphellandrene and six minor products, zingiberene, 7-epi-sesquithujene, sesquisabinene A, (E)-alpha-bergamotene, (E)-beta-farnesene and beta-bisabolene. Can also accept geranyl diphosphate as substrate, producing nine monoterpenes, with myrcene and limonene as the major products. This chain is Beta-sesquiphellandrene synthase (TPS2), found in Sorghum bicolor (Sorghum).